We begin with the raw amino-acid sequence, 152 residues long: Small ribosomal subunit protein uS19u (152 aa).

This sequence belongs to the universal ribosomal protein uS19 family.

Its subcellular location is the cytoplasm. The polypeptide is Small ribosomal subunit protein uS19u (RPS15A) (Arabidopsis thaliana (Mouse-ear cress)).